Reading from the N-terminus, the 756-residue chain is ATP-dependent zinc metalloprotease FtsH (756 aa).

Over Met1 to Ser44 the chain is Cytoplasmic. A helical membrane pass occupies residues Trp45–Thr65. Topologically, residues Gln66 to Ser148 are extracellular. Residues Phe149–Phe169 form a helical membrane-spanning segment. Over Leu170–Gly756 the chain is Cytoplasmic. Gly241–Thr248 provides a ligand contact to ATP. Position 463 (His463) interacts with Zn(2+). The active site involves Glu464. Residues His467 and Asp539 each coordinate Zn(2+). Basic and acidic residues-rich tracts occupy residues Pro647–Asp662 and Leu672–Glu681. Positions Pro647–Gly756 are disordered. 2 stretches are compositionally biased toward low complexity: residues Ala684–Ala703 and Pro713–Ala724. Residues Gly744–Gly756 are compositionally biased toward polar residues.

It in the central section; belongs to the AAA ATPase family. The protein in the C-terminal section; belongs to the peptidase M41 family. In terms of assembly, homohexamer. It depends on Zn(2+) as a cofactor.

The protein localises to the cell membrane. In terms of biological role, acts as a processive, ATP-dependent zinc metallopeptidase for both cytoplasmic and membrane proteins. Plays a role in the quality control of integral membrane proteins. The sequence is that of ATP-dependent zinc metalloprotease FtsH from Rothia mucilaginosa (strain DY-18) (Stomatococcus mucilaginosus).